Here is a 369-residue protein sequence, read N- to C-terminus: Glycolate oxidase (369 aa).

The residue at position 1 (Met-1) is an N-acetylmethionine. The 359-residue stretch at 1-359 folds into the FMN hydroxy acid dehydrogenase domain; it reads MEITNVNEYE…SRSHIAADWD (359 aa). A glyoxylate-binding site is contributed by Tyr-24. FMN-binding positions include 77 to 79, Ser-106, 127 to 129, and Thr-155; these read PTA and QLY. Tyr-129 is a binding site for glyoxylate. Arg-164 contacts glyoxylate. FMN contacts are provided by Lys-230 and Ser-252. Glyoxylate-binding residues include His-254 and Arg-257. His-254 acts as the Proton acceptor in catalysis. Residues 285-289 and 308-309 each bind FMN; these read DGGVR and GR. Residues 367 to 369 carry the Microbody targeting signal motif; it reads ARL.

It belongs to the FMN-dependent alpha-hydroxy acid dehydrogenase family. In terms of assembly, homotetramer. Requires FMN as cofactor.

Its subcellular location is the peroxisome. It carries out the reaction glycolate + O2 = glyoxylate + H2O2. The enzyme catalyses a (2S)-2-hydroxycarboxylate + O2 = a 2-oxocarboxylate + H2O2. Its pathway is photosynthesis; photorespiration; glycine from 2-phosphoglycolate: step 2/3. Its function is as follows. Catalyzes the oxidation of glycolate to glyoxylate, with a reduction of O2 to H2O2. Is a key enzyme in photorespiration in green plants. To a lesser extent, is also able to use L-lactate and 2-hydroxbyutanoate as substrate in vitro, but shows almost no activity with L-mandelate. This chain is Glycolate oxidase, found in Spinacia oleracea (Spinach).